The primary structure comprises 310 residues: Cytochrome f (310 aa).

Residues 1–23 (MRRLIPILLGSLVLSLSILVAPA) form the signal peptide. Heme is bound by residues tyrosine 28, cysteine 48, cysteine 51, and histidine 52. Residues 277-297 (IYGLLAFFVAVSLAQILLVLK) form a helical membrane-spanning segment.

Belongs to the cytochrome f family. In terms of assembly, the 4 large subunits of the cytochrome b6-f complex are cytochrome b6, subunit IV (17 kDa polypeptide, PetD), cytochrome f and the Rieske protein, while the 4 small subunits are PetG, PetL, PetM and PetN. The complex functions as a dimer. It depends on heme as a cofactor.

It is found in the cellular thylakoid membrane. Component of the cytochrome b6-f complex, which mediates electron transfer between photosystem II (PSII) and photosystem I (PSI), cyclic electron flow around PSI, and state transitions. In Prochlorococcus marinus (strain MIT 9313), this protein is Cytochrome f.